A 150-amino-acid polypeptide reads, in one-letter code: UPF0178 protein Sbal223_2514 (150 aa).

Belongs to the UPF0178 family.

This Shewanella baltica (strain OS223) protein is UPF0178 protein Sbal223_2514.